We begin with the raw amino-acid sequence, 1890 residues long: Proteasome-associated protein ECM29 homolog (1890 aa).

18 HEAT repeats span residues 6–29 (NAEIELLERVLLRLGNADSDEKLE), 30–67 (AAVGKFLTPVILKMNSPHNVVRTKVVEVLTHIKRRLSS), 130–167 (DKLFALLLPVLSDMKIPDDPTQRSKLLDLQDKPAICAN), 226–263 (FSDLQIFVPLVVASADTRFSVATPAITELSKLCTMLDF), 294–330 (RVRQKLLQYLIKCRGKSINVTKGLQVTFDGFFGTNTN), 334–354 (KVLALQFMELLLRDGPRELVS), 355–395 (KVSK…SFPQ), 459–496 (GQQHLLLAMLLDNAESKVQIVQNVTSVFLTSCYPEYYA), 498–523 (ARYLLLLIAGERNSLRENVTTYLYGT), 524–561 (SKKDHINYSMLSSIDHSKNRISSESISDFNHLSLEQRR), 565–602 (PSFQVMMSHVHEMAEKRLKKNTACVVVGRTKLPYSLEV), 685–722 (AKQLHLLEPLGNTLKDVSETMRINVAQVYGILWAFGLS), 776–813 (PQFVNAVKIISKCLCESQWLLVSAAVKCISMIGKAVEI), 843–882 (STKLVIFGVVFQLLRSSSARQKIREDSARCLGYLAIGDGE), 938–975 (DDFDQFLNSLIRLVTDPNPHSRQAISVWLLAVVKHCSQ), 980–1018 (LAKKELLQFAFTELLSDDSEFVQDVASRGLGLVYSISDS), 1118–1155 (PYLGKIIPRLYRYKYDPTPKIQNSMISIWDTIVTDSKE), and 1159–1196 (RYYWEILRELLDNLTCKEWRVRIACCLAVRDLLNRPNG). Serine 1213 is subject to Phosphoserine. 8 HEAT repeats span residues 1271 to 1309 (AVASSILPFLLETGVGHKVPEIRRVSIKTISDMIDSSGS), 1313 to 1350 (PHLATLIPCLLRATGELENTKLSYVSTRLGADNEAQEA), 1378 to 1415 (SVLEKMTPEVLELMKGSVNLGTKIGCAHFVCLISIRLG), 1416 to 1457 (KEMT…LAKE), 1497 to 1534 (DYMDSMLPLIFFAMHEEPNEETKANVELWKDLWHDVSP), 1541 to 1578 (LNLNVIIPKLESSLTDASWSRKAQAANAIQTIATRLSS), 1583 to 1620 (PDRLRLIKLLLSGLQGRTFEGKERLLQALAALTKGLDR), and 1623 to 1660 (QICSSIIDAAMREARKREPVYRTMALASLGEILDQLEA). The tract at residues 1680–1702 (RKESDDEDEPNTSQELSADERNK) is disordered. A Phosphoserine modification is found at serine 1683. Threonine 1691 carries the phosphothreonine modification. Serine 1692 bears the Phosphoserine mark. HEAT repeat units lie at residues 1751–1788 (PVQVSLLAALTKYIERLHVFDESAQVPDLTQINQEKKI) and 1826–1863 (KEALNIVLMLIKRLSGSGNGNQQPLRLIKQSFESNLEK).

Associated with the proteasome.

Its subcellular location is the cytoplasm. The polypeptide is Proteasome-associated protein ECM29 homolog (Drosophila melanogaster (Fruit fly)).